We begin with the raw amino-acid sequence, 96 residues long: Seed trypsin/chymotrypsin inhibitor IVA (96 aa).

The signal sequence occupies residues 1 to 10; sequence LSFAANVVNA. Residues 11-24 constitute a propeptide that is removed on maturation; it reads RFDSTSFITQVLSN. 7 disulfides stabilise this stretch: cysteine 32–cysteine 85, cysteine 33–cysteine 48, cysteine 36–cysteine 81, cysteine 38–cysteine 46, cysteine 55–cysteine 62, cysteine 59–cysteine 74, and cysteine 64–cysteine 72. Positions 88-96 are cleaved as a propeptide — removed in PSTI I; the sequence is SEVEEVIKN.

The protein belongs to the Bowman-Birk serine protease inhibitor family. In terms of tissue distribution, seed.

Functionally, inhibitor of trypsin and of chymotrypsin. May function as a natural phytochemical defense against predators. The polypeptide is Seed trypsin/chymotrypsin inhibitor IVA (TI1236) (Pisum sativum (Garden pea)).